A 298-amino-acid polypeptide reads, in one-letter code: GTPase Era (298 aa).

The 168-residue stretch at 3–170 folds into the Era-type G domain; the sequence is KSGFVAILGR…VQLLKDNLEE (168 aa). Residues 11–18 form a G1 region; sequence GRPNVGKS. 11 to 18 contributes to the GTP binding site; sequence GRPNVGKS. Residues 37–41 form a G2 region; sequence QTTRN. A G3 region spans residues 58–61; sequence DTPG. GTP is bound by residues 58-62 and 120-123; these read DTPGI and NKID. The segment at 120–123 is G4; that stretch reads NKID. A G5 region spans residues 149–151; that stretch reads ISA. The KH type-2 domain maps to 201-279; it reads TQQEVPHSVA…YLETWVKVKK (79 aa).

Belongs to the TRAFAC class TrmE-Era-EngA-EngB-Septin-like GTPase superfamily. Era GTPase family. In terms of assembly, monomer.

The protein localises to the cytoplasm. It is found in the cell membrane. In terms of biological role, an essential GTPase that binds both GDP and GTP, with rapid nucleotide exchange. Plays a role in 16S rRNA processing and 30S ribosomal subunit biogenesis and possibly also in cell cycle regulation and energy metabolism. This chain is GTPase Era, found in Streptococcus equi subsp. zooepidemicus (strain MGCS10565).